The following is a 177-amino-acid chain: Putative rubredoxin (177 aa).

In terms of domain architecture, Rubredoxin-like spans 1-38 (MKICRICGYQIPEGEFNLLEDGWVCPRCGVGKEELQDS). Cys4, Cys7, Cys25, and Cys28 together coordinate Fe cation.

Belongs to the rubredoxin family. Fe(3+) is required as a cofactor.

This Methanothermobacter thermautotrophicus (strain ATCC 29096 / DSM 1053 / JCM 10044 / NBRC 100330 / Delta H) (Methanobacterium thermoautotrophicum) protein is Putative rubredoxin (rdxA).